We begin with the raw amino-acid sequence, 481 residues long: Serine/threonine-protein kinase US3 (481 aa).

Residues 12–63 form a disordered region; the sequence is RPDKRQEASVPPETNTAPAFPASTFYTPAEDAYLAPGPPETIHPSRPPSPGE. Residues 47–61 are compositionally biased toward pro residues; the sequence is PGPPETIHPSRPPSP. The 288-residue stretch at 191–478 folds into the Protein kinase domain; the sequence is FAIHGALIPG…AAELLRLPLF (288 aa). Residues 197–205 and lysine 220 contribute to the ATP site; that span reads LIPGSEGCV. The active-site Proton acceptor is the aspartate 305.

This sequence belongs to the protein kinase superfamily. Ser/Thr protein kinase family. As to quaternary structure, interacts with host LAT; this interaction prevents LAT activation of TRAF6. In terms of processing, phosphorylated by UL13; this phosphorylation regulates subsequent phosphorylation of UL31 and UL34 by US3. Autophosphorylated.

The protein resides in the host cytoplasm. It localises to the host nucleus. It catalyses the reaction L-seryl-[protein] + ATP = O-phospho-L-seryl-[protein] + ADP + H(+). It carries out the reaction L-threonyl-[protein] + ATP = O-phospho-L-threonyl-[protein] + ADP + H(+). Functionally, multifunctional serine/threonine kinase that plays a role in several processes including egress of virus particles from the nucleus, modulation of the actin cytoskeleton and inhibition of host immune response. Phosphorylates UL31 and UL34, two critical regulators of capsid budding from nucleus to endoplasmic reticulum, thereby facilitating virion egress. Modulates and redistributes host components of the nuclear envelope, including LMNA, emerin/EMD and the nuclear matrix protein MATR3. In turn, facilitates nuclear pore impairment and capsid release through impaired nuclear envelope. Phosphorylates envelope glycoprotein B (gB), probably to direct it to the cell surface. Promotes virus intracellular spread by restructuring host cell cytoskeleton. Blocks host apoptosis to extend cell survival and allow efficient viral replication. Promotes viral gene expression by phosphorylating host HDAC2 to reduce viral genome silencing. Strongly inhibits TCR-activated signal transduction in T-cells by reducing the ubiquitination of LAT and TRAF6, leading to a suboptimal activation of LAT. Subverts host antiviral innate immunity by inhibiting type I interferon production through hyperphosphorylation of beta-catenin/CTNNB1. In addition, phosphorylates the RNA sensor RIGI and the transcription factor IRF3 to prevent the RLR-mediated antiviral signaling pathway. Hyperphosphorylates host RELA and thereby dampens NF-kappa-B signaling. Acts as an immunoevasin partly responsible for inhibition of MR1 expression and antigen presentation in response to bacterial infection. This chain is Serine/threonine-protein kinase US3 (US3), found in Human herpesvirus 2 (strain HG52) (HHV-2).